We begin with the raw amino-acid sequence, 335 residues long: Transcription factor IIIA (335 aa).

9 C2H2-type zinc fingers span residues 13–37 (YICSFADCSASYNKNWKLQAHLCKH), 43–67 (FPCTVEGCGKGFVTLFHLTRHSMTH), 73–98 (CKCDAPDCDLSFTTMTNLRKHYQRAH), 105–129 (YECYFADCGQTFKKHNQLKLHQYIH), 135–159 (FKCNHEGCDKSFSSPSRLKRHEKVH), 162–188 (YPCQKDSSCSFVGKTWTEYMKHLAASH), 192–214 (TICDVCNRKFKNKTHLKDHKRTH), 221–246 (YKCPRDGCDRTYTKKFGLQSHILSFH), and 252–276 (FACGHPGCGKTFAMKQSLDRHANTH). The segment covering 269–280 (LDRHANTHDPEK) has biased composition (basic and acidic residues). Residues 269 to 335 (LDRHANTHDP…ATAMQNLSIK (67 aa)) form a disordered region. Over residues 281-292 (KKMKKPRPKKSL) the composition is skewed to basic residues.

Its subcellular location is the nucleus. Involved in ribosomal large subunit biogenesis. Interacts with the internal control region (ICR) of approximately 50 bases within the 5S RNA genes, is required for correct transcription of these genes by RNA polymerase III. Also binds the transcribed 5S RNA's. The sequence is that of Transcription factor IIIA (gtf3a) from Lithobates pipiens (Northern leopard frog).